The primary structure comprises 322 residues: Cytochrome c biogenesis protein CcsA (322 aa).

Transmembrane regions (helical) follow at residues 9-29 (ILTH…LITL), 44-64 (GMIA…IYSG), 71-91 (LYES…VPYF), 98-118 (LTTI…SGLL), 143-163 (MILS…LLVI), 226-246 (VISL…VWAN), 253-273 (WSWD…AIYL), and 287-307 (AIVA…VNLL).

Belongs to the CcmF/CycK/Ccl1/NrfE/CcsA family. As to quaternary structure, may interact with Ccs1.

The protein localises to the plastid. It is found in the chloroplast thylakoid membrane. Functionally, required during biogenesis of c-type cytochromes (cytochrome c6 and cytochrome f) at the step of heme attachment. The sequence is that of Cytochrome c biogenesis protein CcsA from Helianthus annuus (Common sunflower).